The chain runs to 283 residues: Peroxisomal protein 2 (283 aa).

A Peroxisomal target signal 1 (PTS1) motif is present at residues 281–283 (VKL).

The protein belongs to the PXP2 family.

The protein resides in the peroxisome matrix. It is found in the cytoplasm. It localises to the cytosol. Its function is as follows. Probably involved in peroxisome formation or maintenance as well as in amino acid metabolism. This chain is Peroxisomal protein 2, found in Saccharomyces cerevisiae (strain ATCC 204508 / S288c) (Baker's yeast).